A 148-amino-acid polypeptide reads, in one-letter code: Antitoxin Xre (148 aa).

This sequence belongs to the MbcA/ParS/Xre antitoxin family. As to quaternary structure, homodimer. Forms a complex with cognate toxin Rse.

Antitoxin component of a type II toxin-antitoxin (TA) system. Neutralizes the activity of cognate toxin Res. The sequence is that of Antitoxin Xre from Yersinia enterocolitica serotype O:8 / biotype 1B (strain NCTC 13174 / 8081).